A 239-amino-acid polypeptide reads, in one-letter code: MGKITRRTREAKKKQRQPIVKVCLSYPIIPQVEEGEVIDIVHERSRGAPVAIISFKEDDCMVPASEGMYTGQKILIGDDAPIDIGNITKIKNVPEGMAVNSVESVYGDGGTFAMVNGSYSLVVNHRKETNETVIKIPSGKKLTVSSECRCIVGVVAGGGIHDKPLLKASVAHYKAKARGHVFPRVRGVAMNPVEHIHGGGNHQHVGKPTTVSKKDISQEQKIGLVGARRTGYRVGSRKL.

This sequence belongs to the universal ribosomal protein uL2 family.

It localises to the cytoplasm. In Encephalitozoon cuniculi (strain GB-M1) (Microsporidian parasite), this protein is Large ribosomal subunit protein uL2 (RPL8).